The following is a 156-amino-acid chain: ATP synthase subunit b (156 aa).

A helical membrane pass occupies residues leucine 7–leucine 29.

It belongs to the ATPase B chain family. As to quaternary structure, F-type ATPases have 2 components, F(1) - the catalytic core - and F(0) - the membrane proton channel. F(1) has five subunits: alpha(3), beta(3), gamma(1), delta(1), epsilon(1). F(0) has three main subunits: a(1), b(2) and c(10-14). The alpha and beta chains form an alternating ring which encloses part of the gamma chain. F(1) is attached to F(0) by a central stalk formed by the gamma and epsilon chains, while a peripheral stalk is formed by the delta and b chains.

It localises to the cell inner membrane. Functionally, f(1)F(0) ATP synthase produces ATP from ADP in the presence of a proton or sodium gradient. F-type ATPases consist of two structural domains, F(1) containing the extramembraneous catalytic core and F(0) containing the membrane proton channel, linked together by a central stalk and a peripheral stalk. During catalysis, ATP synthesis in the catalytic domain of F(1) is coupled via a rotary mechanism of the central stalk subunits to proton translocation. Its function is as follows. Component of the F(0) channel, it forms part of the peripheral stalk, linking F(1) to F(0). The polypeptide is ATP synthase subunit b (Vibrio alginolyticus).